Here is a 131-residue protein sequence, read N- to C-terminus: NADH dehydrogenase [ubiquinone] 1 alpha subcomplex subunit 6 (131 aa).

This sequence belongs to the complex I LYR family. As to quaternary structure, mammalian complex I is composed of 45 different subunits.

It is found in the mitochondrion inner membrane. Functionally, accessory subunit of the mitochondrial membrane respiratory chain NADH dehydrogenase (Complex I), that is believed to be not involved in catalysis. Required for proper complex I assembly. Complex I functions in the transfer of electrons from NADH to the respiratory chain. The immediate electron acceptor for the enzyme is believed to be ubiquinone. The sequence is that of NADH dehydrogenase [ubiquinone] 1 alpha subcomplex subunit 6 from Mus musculus (Mouse).